A 79-amino-acid chain; its full sequence is RNA-binding protein Hfq (79 aa).

The region spanning Asp10–Val69 is the Sm domain.

It belongs to the Hfq family. In terms of assembly, homohexamer.

Its function is as follows. RNA chaperone that binds small regulatory RNA (sRNAs) and mRNAs to facilitate mRNA translational regulation in response to envelope stress, environmental stress and changes in metabolite concentrations. Also binds with high specificity to tRNAs. This Cupriavidus metallidurans (strain ATCC 43123 / DSM 2839 / NBRC 102507 / CH34) (Ralstonia metallidurans) protein is RNA-binding protein Hfq.